We begin with the raw amino-acid sequence, 1254 residues long: Juxtamembrane domain-associated catenin (1254 aa).

Disordered stretches follow at residues 1–38, 84–106, and 145–209; these read MISSGWMQEMEPIPEEGTEADGSEWGAMSDTAKRTMRK, AGPTSARGSSYSYSYESHYDNPP, and PYSN…SAPG. Acidic residues predominate over residues 12 to 22; it reads PIPEEGTEADG. Residues 145–157 show a composition bias toward polar residues; that stretch reads PYSNIDFDSSGLP. Fibronectin type-III domains lie at 207-302, 315-411, 428-518, and 530-624; these read APGV…IPIS, APGR…IRPA, PPGQ…LRPT, and ILEA…IEPS. Residues 412-433 are disordered; it reads APQRHVPARKVSESVQPPGQPQ. The disordered stretch occupies residues 662 to 685; sequence MVRESPPLPERDDSPPPLRRANNN. ARM repeat units lie at residues 733 to 775, 777 to 820, 874 to 922, 969 to 1012, and 1016 to 1058; these read GGIP…AVME, DGVR…ESAT, NLIE…YDPA, HVVK…RAAV, and KGLP…KYAL. The segment at 920–960 is disordered; that stretch reads DPAAAHSSSSKNMKHVASPKPEKKKKDKEKKKDKNPKNIVT. A disordered region spans residues 1159 to 1254; that stretch reads GTARRGDSST…GGGNIDDSWV (96 aa). The span at 1166-1176 shows a compositional bias: polar residues; the sequence is SSTLARPISSQ. Basic and acidic residues predominate over residues 1177–1187; that stretch reads GRERPSMHQLD.

The protein belongs to the beta-catenin family. Associated with the catenin-cadherin complex consisting of hmr-1, hmp-1 and hmp-2. Interacts with hmr-1. Interacts with picc-1. As to expression, epidermal cells.

Its subcellular location is the cell junction. The protein localises to the adherens junction. The protein resides in the nucleus. In terms of biological role, may act as a positive modulator of hmr-1 function during epidermal morphogenesis. Required for proper localization of other junctional components, such as pac-1. The polypeptide is Juxtamembrane domain-associated catenin (jac-1) (Caenorhabditis elegans).